Reading from the N-terminus, the 603-residue chain is Pyruvate decarboxylase 4 (603 aa).

Substrate-binding residues include D65 and H152. Residues 430 to 512 are thiamine pyrophosphate binding; the sequence is DSWFNCQKLK…FLINNGGYTI (83 aa). Residues D480, N507, and G509 each coordinate Mg(2+). E513 is a binding site for substrate.

Belongs to the TPP enzyme family. In terms of assembly, homotetramer. A metal cation serves as cofactor. Requires thiamine diphosphate as cofactor. As to expression, expressed in shoots and at lowe levels in roots, flowers and siliques.

It carries out the reaction a 2-oxocarboxylate + H(+) = an aldehyde + CO2. This chain is Pyruvate decarboxylase 4 (PDC4), found in Arabidopsis thaliana (Mouse-ear cress).